The primary structure comprises 65 residues: uncharacterized protein (65 aa).

The Cytoplasmic portion of the chain corresponds to 1–20; that stretch reads MRFSNCFNKFKFCIGTEKKY. A helical membrane pass occupies residues 21-43; sequence SFPICTSTYTSFSLFACIWSIFI. Over 44-65 the chain is Extracellular; it reads HISLNKSFIYQKSWYYSFFQNR.

It localises to the host membrane. This is an uncharacterized protein from Acidianus sp. F28 (AFV-2).